The primary structure comprises 165 residues: Sec-independent protein translocase protein TatB (165 aa).

The chain crosses the membrane as a helical span at residues 1-21 (MFDVSFTELIVIGVVALIVLG). The segment covering 67–84 (DSTAQDVNQSLRSATDSL) has biased composition (polar residues). Residues 67–165 (DSTAQDVNQS…PKSPSTGNAT (99 aa)) form a disordered region. Residues 127–159 (KLPGTPATLPATAAAEPTPAAPAASQAEAPKSP) show a composition bias toward low complexity.

This sequence belongs to the TatB family. In terms of assembly, the Tat system comprises two distinct complexes: a TatABC complex, containing multiple copies of TatA, TatB and TatC subunits, and a separate TatA complex, containing only TatA subunits. Substrates initially bind to the TatABC complex, which probably triggers association of the separate TatA complex to form the active translocon.

The protein resides in the cell inner membrane. Functionally, part of the twin-arginine translocation (Tat) system that transports large folded proteins containing a characteristic twin-arginine motif in their signal peptide across membranes. Together with TatC, TatB is part of a receptor directly interacting with Tat signal peptides. TatB may form an oligomeric binding site that transiently accommodates folded Tat precursor proteins before their translocation. The protein is Sec-independent protein translocase protein TatB of Bordetella avium (strain 197N).